The primary structure comprises 608 residues: Histone-arginine methyltransferase CARM1 (608 aa).

The interval 28–139 (ATVSVFPGAR…GHTLERSVFS (112 aa)) is interaction with C9orf72. The 308-residue stretch at 147-454 (AVQYFQFYGY…KRQSYDISIV (308 aa)) folds into the SAM-dependent MTase PRMT-type domain. S-adenosyl-L-methionine-binding residues include glutamine 160, arginine 169, glycine 193, and glutamate 215. Residue serine 217 is modified to Phosphoserine. Residue lysine 228 forms a Glycyl lysine isopeptide (Lys-Gly) (interchain with G-Cter in ubiquitin) linkage. The S-adenosyl-L-methionine site is built by glutamate 244 and serine 272. Positions 347-380 (RILMAKSVKYTVNFLEAKEGDLHRIEIPFKFHML) are required for nuclear translocation. The segment at 500-608 (TGSTYNLSSG…IPTNTMHYGS (109 aa)) is transactivation domain. Residue arginine 551 is modified to Dimethylated arginine.

The protein belongs to the class I-like SAM-binding methyltransferase superfamily. Protein arginine N-methyltransferase family. Homodimer. Interacts with NR1H4. Interacts with SNRPC. Interacts with the C-terminus of NCOA2/GRIP1, NCO3/ACTR and NCOA1/SRC1. Part of a complex consisting of CARM1, EP300/P300 and NCOA2/GRIP1. Interacts with FLII, TP53, myogenic factor MEF2, EP300/P300, TRIM24, CREBBP and CTNNB1. Interacts with RELA. Identified in a complex containing CARM1, TRIM24 and NCOA2/GRIP1. Interacts with NCOA3/SRC3. Interacts with SKP2. Interacts (via PH domain-like fold) with C9orf72. Interacts with PARP1; promoting PARP1 recruimtent to replication forks. In terms of processing, phosphorylation at Ser-217 is strongly increased during mitosis, and decreases rapidly to a very low, basal level after entry into the G1 phase of the cell cycle. Phosphorylation at Ser-217 interferes with S-adenosyl-L-methionine binding and strongly reduces methyltransferase activity. Phosphorylation at Ser-217 may promote cytosolic location. Post-translationally, auto-methylated on Arg-551. Methylation enhances transcription coactivator activity. Methylation is required for its role in the regulation of pre-mRNA alternative splicing. Ubiquitinated by E3 ubiquitin-protein ligase complex containing FBXO9 at Lys-228; leading to proteasomal degradation. As to expression, ubiquitously expressed. Within the brain, present in proliferating cells from lateral ventricular zone and dentate gyrus (at protein level).

It localises to the nucleus. It is found in the cytoplasm. The protein localises to the chromosome. It catalyses the reaction L-arginyl-[protein] + 2 S-adenosyl-L-methionine = N(omega),N(omega)-dimethyl-L-arginyl-[protein] + 2 S-adenosyl-L-homocysteine + 2 H(+). Its activity is regulated as follows. Methylation of H3R17 (H3R17me) by CARM1 is stimulated by preacetylation of H3 'Lys-18' (H3K18ac) H3 'Lys-23' (H3K23ac) by EP300 and blocked by citrullination of H3 'Arg-17' (H3R17ci) by PADI4. Functionally, methylates (mono- and asymmetric dimethylation) the guanidino nitrogens of arginyl residues in several proteins involved in DNA packaging, transcription regulation, pre-mRNA splicing, and mRNA stability. Recruited to promoters upon gene activation together with histone acetyltransferases from EP300/P300 and p160 families, methylates histone H3 at 'Arg-17' (H3R17me), forming mainly asymmetric dimethylarginine (H3R17me2a), leading to activation of transcription via chromatin remodeling. During nuclear hormone receptor activation and TCF7L2/TCF4 activation, acts synergically with EP300/P300 and either one of the p160 histone acetyltransferases NCOA1/SRC1, NCOA2/GRIP1 and NCOA3/ACTR or CTNNB1/beta-catenin to activate transcription. During myogenic transcriptional activation, acts together with NCOA3/ACTR as a coactivator for MEF2C. During monocyte inflammatory stimulation, acts together with EP300/P300 as a coactivator for NF-kappa-B. Acts as a coactivator for PPARG, promotes adipocyte differentiation and the accumulation of brown fat tissue. Plays a role in the regulation of pre-mRNA alternative splicing by methylation of splicing factors. Also seems to be involved in p53/TP53 transcriptional activation. Methylates EP300/P300, both at 'Arg-2142', which may loosen its interaction with NCOA2/GRIP1, and at 'Arg-580' and 'Arg-604' in the KIX domain, which impairs its interaction with CREB and inhibits CREB-dependent transcriptional activation. Also methylates arginine residues in RNA-binding proteins PABPC1, ELAVL1 and ELAV4, which may affect their mRNA-stabilizing properties and the half-life of their target mRNAs. Acts as a transcriptional coactivator of ACACA/acetyl-CoA carboxylase by enriching H3R17 methylation at its promoter, thereby positively regulating fatty acid synthesis. Independently of its methyltransferase activity, involved in replication fork progression: promotes PARP1 recruitment to replication forks, leading to poly-ADP-ribosylation of chromatin at replication forks and reduced fork speed. The chain is Histone-arginine methyltransferase CARM1 (Carm1) from Mus musculus (Mouse).